A 267-amino-acid chain; its full sequence is 5'-nucleotidase SurE (267 aa).

Positions 14, 15, 45, and 100 each coordinate a divalent metal cation.

It belongs to the SurE nucleotidase family. A divalent metal cation is required as a cofactor.

The protein resides in the cytoplasm. It catalyses the reaction a ribonucleoside 5'-phosphate + H2O = a ribonucleoside + phosphate. In terms of biological role, nucleotidase that shows phosphatase activity on nucleoside 5'-monophosphates. The sequence is that of 5'-nucleotidase SurE from Methanosarcina acetivorans (strain ATCC 35395 / DSM 2834 / JCM 12185 / C2A).